The sequence spans 435 residues: Asparagine--tRNA ligase (435 aa).

The protein belongs to the class-II aminoacyl-tRNA synthetase family. As to quaternary structure, homodimer.

Its subcellular location is the cytoplasm. The enzyme catalyses tRNA(Asn) + L-asparagine + ATP = L-asparaginyl-tRNA(Asn) + AMP + diphosphate + H(+). The protein is Asparagine--tRNA ligase of Leptospira interrogans serogroup Icterohaemorrhagiae serovar Lai (strain 56601).